Consider the following 557-residue polypeptide: Alpha-glucosidase (557 aa).

The Nucleophile role is filled by Asp201. Glu256 functions as the Proton donor in the catalytic mechanism.

This sequence belongs to the glycosyl hydrolase 13 family.

It catalyses the reaction Hydrolysis of terminal, non-reducing (1-&gt;4)-linked alpha-D-glucose residues with release of alpha-D-glucose.. The sequence is that of Alpha-glucosidase (agl) from Pediococcus pentosaceus.